The sequence spans 290 residues: 33 kDa chaperonin (290 aa).

2 cysteine pairs are disulfide-bonded: cysteine 236–cysteine 238 and cysteine 269–cysteine 272.

The protein belongs to the HSP33 family. In terms of processing, under oxidizing conditions two disulfide bonds are formed involving the reactive cysteines. Under reducing conditions zinc is bound to the reactive cysteines and the protein is inactive.

It localises to the cytoplasm. In terms of biological role, redox regulated molecular chaperone. Protects both thermally unfolding and oxidatively damaged proteins from irreversible aggregation. Plays an important role in the bacterial defense system toward oxidative stress. This is 33 kDa chaperonin from Acholeplasma laidlawii (strain PG-8A).